A 489-amino-acid polypeptide reads, in one-letter code: Putative ATP-dependent RNA helicase T26G10.1 (489 aa).

The short motif at 44-72 (KSFAELGVSQPLCDACQRLGWMKPSKIQQ) is the Q motif element. In terms of domain architecture, Helicase ATP-binding spans 75-246 (LPHALQGKDV…RASLRDPARV (172 aa)). 88–95 (AETGSGKT) contacts ATP. The DEAD box signature appears at 194 to 197 (DEAD). The region spanning 257 to 417 (NLKQHYIFVP…EYKCVENEVM (161 aa)) is the Helicase C-terminal domain. Residues 433–489 (EMKEMDEKKKSGKKRRQNDDFGDTEESGGRFKMGIKSMGGRGGSGGGRGGKKKKMSK) form a disordered region. Gly residues predominate over residues 469 to 480 (SMGGRGGSGGGR).

It belongs to the DEAD box helicase family. DDX47/RRP3 subfamily.

It localises to the nucleus. The catalysed reaction is ATP + H2O = ADP + phosphate + H(+). Its function is as follows. Probable ATP-dependent RNA helicase which may be involved in ribosome biogenesis. The polypeptide is Putative ATP-dependent RNA helicase T26G10.1 (Caenorhabditis elegans).